Consider the following 417-residue polypeptide: Phosphatidylcholine:ceramide cholinephosphotransferase 1 (417 aa).

The region spanning 11–74 is the SAM domain; the sequence is WSPEEVTNWL…LHMIETLKMA (64 aa). Transmembrane regions (helical) follow at residues 140–160, 188–208, 219–239, 280–300, and 308–328; these read FLAFIYALFCFIFTTVTISVV, FSICEINGMILVGLWLVQWLL, FFCIVCTLYLYRCITMYVTTL, MCGDYLYSGHTVILTLTYLFI, and LWWYHWLCWTLSMVGMFCILL. The active site involves His-289. Over 329-417 the chain is Cytoplasmic; that stretch reads AHDHYTVDVV…VKYSRLVNDT (89 aa). Catalysis depends on residues His-332 and Asp-336.

This sequence belongs to the sphingomyelin synthase family.

It localises to the golgi apparatus membrane. The catalysed reaction is an N-acylsphing-4-enine + a 1,2-diacyl-sn-glycero-3-phosphocholine = a sphingomyelin + a 1,2-diacyl-sn-glycerol. It carries out the reaction an N-acylsphing-4-enine + a 1,2-diacyl-sn-glycero-3-phosphoethanolamine = an N-acylsphing-4-enine 1-phosphoethanolamine + a 1,2-diacyl-sn-glycerol. Its function is as follows. Major sphingomyelin synthase at the Golgi apparatus. Catalyzes the reversible transfer of phosphocholine moiety in sphingomyelin biosynthesis: in the forward reaction transfers phosphocholine head group of phosphatidylcholine (PC) on to ceramide (CER) to form ceramide phosphocholine (sphingomyelin, SM) and diacylglycerol (DAG) as by-product, and in the reverse reaction transfers phosphocholine from SM to DAG to form PC and CER. The direction of the reaction depends on the levels of CER and DAG in Golgi membranes. Converts the newly synthesized CER, that is transported from the endoplasmic reticulum to the trans-Golgi by the Cer transport protein (CERT), to SM. Can form a heteromeric complex with glucosylceramide synthase (GCS) increasing SMS activity and reducing glucosylceramide synthesis, a critical mechanism that controls the metabolic fate of CER in the Golgi. Does not use free phosphorylcholine or CDP-choline as donor. Can also transfer phosphoethanolamine head group of phosphatidylethanolamine (PE) on to CER to form ceramide phosphoethanolamine (CPE). Regulates receptor-mediated signal transduction via mitogenic DAG and proapoptotic CER, as well as via SM, a structural component of membrane rafts that serve as platforms for signal transduction and protein sorting. Plays a role in secretory transport via regulation of DAG pool at the Golgi apparatus and its downstream effects on PRKD1. This chain is Phosphatidylcholine:ceramide cholinephosphotransferase 1 (SGMS1), found in Gallus gallus (Chicken).